We begin with the raw amino-acid sequence, 191 residues long: Zinc finger protein GIS2 (191 aa).

The C2H2-type zinc finger occupies 55–77; that stretch reads FKCHYCFRNFPTSQALGGHQNAH.

In terms of tissue distribution, expressed in inflorescence meristems, floral meristems and stem epidermis.

It is found in the nucleus. In terms of biological role, probable transcription factor required for the initiation of inflorescence trichomes in response to gibberellin and cytokinin. Is not involved in the regulation of trichome branching. Is functionally equivalent to ZFP8. This Arabidopsis thaliana (Mouse-ear cress) protein is Zinc finger protein GIS2 (GIS2).